A 599-amino-acid polypeptide reads, in one-letter code: Sulfite reductase [NADPH] flavoprotein alpha-component (599 aa).

The region spanning 64–202 is the Flavodoxin-like domain; it reads ITLISASQTG…AAAEWRARVV (139 aa). FMN is bound by residues 70–75, 117–120, and 153–162; these read SQTGNA, STQG, and LGDTSYEFFC. Residues 234-448 form the FAD-binding FR-type domain; sequence EAPLTATLSV…IEHNDNFRLP (215 aa). Residues threonine 322, alanine 356, 386 to 389, 404 to 406, tyrosine 410, and 419 to 422 contribute to the FAD site; these read RLYS, TVG, and GGAS. NADP(+) is bound by residues 519–520, 525–529, and aspartate 561; these read SR and KIYVQ. An FAD-binding site is contributed by tyrosine 599.

This sequence belongs to the NADPH-dependent sulphite reductase flavoprotein subunit CysJ family. The protein in the N-terminal section; belongs to the flavodoxin family. It in the C-terminal section; belongs to the flavoprotein pyridine nucleotide cytochrome reductase family. As to quaternary structure, alpha(8)-beta(8). The alpha component is a flavoprotein, the beta component is a hemoprotein. FAD serves as cofactor. It depends on FMN as a cofactor.

The enzyme catalyses hydrogen sulfide + 3 NADP(+) + 3 H2O = sulfite + 3 NADPH + 4 H(+). Its pathway is sulfur metabolism; hydrogen sulfide biosynthesis; hydrogen sulfide from sulfite (NADPH route): step 1/1. In terms of biological role, component of the sulfite reductase complex that catalyzes the 6-electron reduction of sulfite to sulfide. This is one of several activities required for the biosynthesis of L-cysteine from sulfate. The flavoprotein component catalyzes the electron flow from NADPH -&gt; FAD -&gt; FMN to the hemoprotein component. The protein is Sulfite reductase [NADPH] flavoprotein alpha-component of Klebsiella pneumoniae subsp. pneumoniae (strain ATCC 700721 / MGH 78578).